Reading from the N-terminus, the 299-residue chain is tRNA uridine(34) hydroxylase (299 aa).

The 95-residue stretch at 132 to 226 folds into the Rhodanese domain; sequence AGRPVVMLDT…YFEEVGGAHY (95 aa). The active-site Cysteine persulfide intermediate is cysteine 186.

Belongs to the TrhO family.

It catalyses the reaction uridine(34) in tRNA + AH2 + O2 = 5-hydroxyuridine(34) in tRNA + A + H2O. In terms of biological role, catalyzes oxygen-dependent 5-hydroxyuridine (ho5U) modification at position 34 in tRNAs. The protein is tRNA uridine(34) hydroxylase of Burkholderia pseudomallei (strain 1106a).